The primary structure comprises 581 residues: Putative adenine deaminase BH0637 (581 aa).

The protein belongs to the metallo-dependent hydrolases superfamily. Adenine deaminase family.

It catalyses the reaction adenine + H2O + H(+) = hypoxanthine + NH4(+). The polypeptide is Putative adenine deaminase BH0637 (Halalkalibacterium halodurans (strain ATCC BAA-125 / DSM 18197 / FERM 7344 / JCM 9153 / C-125) (Bacillus halodurans)).